Here is a 225-residue protein sequence, read N- to C-terminus: Riboflavin kinase (225 aa).

Residues 1–89 (MPDIEYLKKL…SRIFSSEPDT (89 aa)) form a unknown region. The segment at 90–225 (LELEGNVLKG…LKKQGMEGQK (136 aa)) is riboflavin kinase. A CDP-binding site is contributed by 99-104 (GLGEGQ). Threonine 128 and asparagine 130 together coordinate Mg(2+). Residues threonine 185 and glutamate 193 each contribute to the FMN site. A CDP-binding site is contributed by 198-201 (VKLR).

This sequence belongs to the archaeal riboflavin kinase family. It depends on Mg(2+) as a cofactor.

The catalysed reaction is riboflavin + CTP = CDP + FMN + H(+). Its pathway is cofactor biosynthesis; FMN biosynthesis; FMN from riboflavin (CTP route): step 1/1. Catalyzes the CTP-dependent phosphorylation of riboflavin (vitamin B2) to form flavin mononucleotide (FMN). In Methanosarcina mazei (strain ATCC BAA-159 / DSM 3647 / Goe1 / Go1 / JCM 11833 / OCM 88) (Methanosarcina frisia), this protein is Riboflavin kinase (ribK).